The sequence spans 570 residues: MFS-type transporter pigP (570 aa).

The segment at 14–54 (GMIKKAHPEQTPPDVSHEGDVATEKGDSDGVEQAAPTGPTD) is disordered. Positions 28–41 (VSHEGDVATEKGDS) are enriched in basic and acidic residues. A run of 7 helical transmembrane segments spans residues 65 to 85 (VMIMSGITLVCFLMLLDTSII), 99 to 119 (LPDVGWYGSAYLLASASLVPL), 131 to 151 (WSFVSFFAVFELGSLLCGVAT), 162 to 182 (VAGMGGSGIQNGAFTIIAGCV), 192 to 212 (GLLMGFAQLGIVIGPLIGGAF), 221 to 241 (CFYINLPIGAVVGLLLFFVHI), and 263 to 283 (LVGFVLFAPAAVQFLLALQYG). Asparagine 290 carries N-linked (GlcNAc...) asparagine glycosylation. 7 consecutive transmembrane segments (helical) span residues 293–313 (VVIGLFCGAGATFVCFILWEW), 336–356 (VVYGFLMATLLVASYYLPIYF), 369–389 (VYILPSILSQSALAIISGALV), 392–412 (FGYYLPWSLAGGIVSSVGNGL), 425–445 (WIGYQILLGAGRGAGLQMPII), 455–475 (LIPVAMALIMFCQSFFGSTFL), and 533–553 (VFYLAVGAAVATFVFSCGMGW).

The protein belongs to the major facilitator superfamily. TCR/Tet family.

Its subcellular location is the cell membrane. MFS-type transporter; part of the gene cluster that mediates the biosynthesis of azaphilone pigments (MonAzPs), very widely used as food colorant. In Monascus ruber (Mold), this protein is MFS-type transporter pigP.